A 435-amino-acid chain; its full sequence is Ribulose bisphosphate carboxylase/oxygenase activase 2, chloroplastic (435 aa).

A chloroplast-targeting transit peptide spans 1–56 (MAAAYSTVGAVNRAPLSLNGSGARASLVPSTAFFGSSLKKSAAKFPKASSGNFKIV). 165-172 (GGKGQGKS) is an ATP binding site.

The protein belongs to the RuBisCO activase family.

The protein resides in the plastid. It localises to the chloroplast stroma. In terms of biological role, activation of RuBisCO (ribulose-1,5-bisphosphate carboxylase/oxygenase; EC 4.1.1.39) involves the ATP-dependent carboxylation of the epsilon-amino group of lysine leading to a carbamate structure. The protein is Ribulose bisphosphate carboxylase/oxygenase activase 2, chloroplastic (RCA2) of Larrea tridentata (Creosote bush).